Reading from the N-terminus, the 273-residue chain is Homeobox protein Nkx-2.2 (273 aa).

2 disordered regions span residues 1–56 (MSLT…LDAV) and 91–131 (AASA…KRKR). The segment covering 20 to 38 (DTNDEDGSVAEGPEEESEG) has biased composition (acidic residues). Positions 128 to 187 (KRKRRVLFSKAQTYELERRFRQQRYLSAPEREHLASLIRLTPTQVKIWFQNHRYKMKRAR) form a DNA-binding region, homeobox.

The protein belongs to the NK-2 homeobox family. As to quaternary structure, interacts with OLIG2. Expressed in restricted areas of the developing CNS: the hindbrain and forebrain, and pancreas.

It localises to the nucleus. In terms of biological role, transcriptional activator involved in the development of insulin-producting beta cells in the endocrine pancreas. May also be involved in specifying diencephalic neuromeric boundaries, and in controlling the expression of genes that play a role in axonal guidance. Binds to elements within the NEUROD1 promoter. The chain is Homeobox protein Nkx-2.2 (Nkx2-2) from Mus musculus (Mouse).